The primary structure comprises 495 residues: UDP-N-acetylmuramoyl-L-alanyl-D-glutamate--2,6-diaminopimelate ligase (495 aa).

UDP-N-acetyl-alpha-D-muramoyl-L-alanyl-D-glutamate is bound by residues leucine 28, serine 30, and 45–47 (HRV). 117–123 (GTNGKTT) provides a ligand contact to ATP. Residues asparagine 158, 159–160 (TT), serine 186, glutamine 192, and arginine 194 each bind UDP-N-acetyl-alpha-D-muramoyl-L-alanyl-D-glutamate. Lysine 226 carries the N6-carboxylysine modification. Meso-2,6-diaminopimelate contacts are provided by residues arginine 394, 418 to 421 (DNPR), glycine 469, and glutamate 473. The short motif at 418–421 (DNPR) is the Meso-diaminopimelate recognition motif element.

This sequence belongs to the MurCDEF family. MurE subfamily. The cofactor is Mg(2+). Post-translationally, carboxylation is probably crucial for Mg(2+) binding and, consequently, for the gamma-phosphate positioning of ATP.

It localises to the cytoplasm. It carries out the reaction UDP-N-acetyl-alpha-D-muramoyl-L-alanyl-D-glutamate + meso-2,6-diaminopimelate + ATP = UDP-N-acetyl-alpha-D-muramoyl-L-alanyl-gamma-D-glutamyl-meso-2,6-diaminopimelate + ADP + phosphate + H(+). It participates in cell wall biogenesis; peptidoglycan biosynthesis. Its function is as follows. Catalyzes the addition of meso-diaminopimelic acid to the nucleotide precursor UDP-N-acetylmuramoyl-L-alanyl-D-glutamate (UMAG) in the biosynthesis of bacterial cell-wall peptidoglycan. The chain is UDP-N-acetylmuramoyl-L-alanyl-D-glutamate--2,6-diaminopimelate ligase from Histophilus somni (strain 129Pt) (Haemophilus somnus).